We begin with the raw amino-acid sequence, 834 residues long: Glycerol-3-phosphate acyltransferase (834 aa).

The HXXXXD motif signature appears at 309–314 (CHRSHI).

This sequence belongs to the GPAT/DAPAT family.

The protein localises to the cell inner membrane. The catalysed reaction is sn-glycerol 3-phosphate + an acyl-CoA = a 1-acyl-sn-glycero-3-phosphate + CoA. It participates in phospholipid metabolism; CDP-diacylglycerol biosynthesis; CDP-diacylglycerol from sn-glycerol 3-phosphate: step 1/3. This Pseudomonas fluorescens (strain ATCC BAA-477 / NRRL B-23932 / Pf-5) protein is Glycerol-3-phosphate acyltransferase.